Reading from the N-terminus, the 360-residue chain is D-alanine--D-alanine ligase (360 aa).

Residues 134-343 (KILAQRVGVP…YTELITRLIE (210 aa)) form the ATP-grasp domain. 169 to 224 (AEKLGRDMFVKPSNQGSSVGVSHVTNADEYAAALKEAFKYDDKVLVEETVPGTEVE) is a binding site for ATP. Residues D297, E310, and N312 each contribute to the Mg(2+) site.

Belongs to the D-alanine--D-alanine ligase family. It depends on Mg(2+) as a cofactor. Requires Mn(2+) as cofactor.

It localises to the cytoplasm. It catalyses the reaction 2 D-alanine + ATP = D-alanyl-D-alanine + ADP + phosphate + H(+). Its pathway is cell wall biogenesis; peptidoglycan biosynthesis. In terms of biological role, cell wall formation. The protein is D-alanine--D-alanine ligase of Lactobacillus helveticus (strain DPC 4571).